Reading from the N-terminus, the 399-residue chain is tRNA-dihydrouridine(16/17) synthase [NAD(P)(+)] (399 aa).

FMN is bound by residues Pro-24–Val-26 and Gln-80. The active-site Proton donor is the Cys-109. Residues Lys-148, His-176, Asn-211 to Asn-213, and Ala-235 to Glu-236 contribute to the FMN site.

It belongs to the Dus family. Dus1 subfamily. Requires FMN as cofactor.

It is found in the nucleus. The protein localises to the mitochondrion. The enzyme catalyses 5,6-dihydrouridine(16) in tRNA + NADP(+) = uridine(16) in tRNA + NADPH + H(+). It catalyses the reaction 5,6-dihydrouridine(16) in tRNA + NAD(+) = uridine(16) in tRNA + NADH + H(+). It carries out the reaction 5,6-dihydrouridine(17) in tRNA + NAD(+) = uridine(17) in tRNA + NADH + H(+). The catalysed reaction is 5,6-dihydrouridine(17) in tRNA + NADP(+) = uridine(17) in tRNA + NADPH + H(+). The enzyme catalyses a 5,6-dihydrouridine in mRNA + NAD(+) = a uridine in mRNA + NADH + H(+). It catalyses the reaction a 5,6-dihydrouridine in mRNA + NADP(+) = a uridine in mRNA + NADPH + H(+). In terms of biological role, catalyzes the synthesis of dihydrouridine, a modified base found in the D-loop of most tRNAs. Also able to mediate dihydrouridylation of some mRNAs, thereby affecting their translation. The chain is tRNA-dihydrouridine(16/17) synthase [NAD(P)(+)] from Schizosaccharomyces pombe (strain 972 / ATCC 24843) (Fission yeast).